A 211-amino-acid chain; its full sequence is Transcription factor ces-2 (211 aa).

Over residues 83 to 101 (VSSRSSTVSSSHFSSPQRS) the composition is skewed to low complexity. Disordered regions lie at residues 83 to 152 (VSSR…HALE) and 184 to 211 (NSEV…TIEV). The span at 111 to 152 (PEEKKDSAYFERRRKNNDAAKRSRDARRQKEEQIASKAHALE) shows a compositional bias: basic and acidic residues. One can recognise a bZIP domain in the interval 116–179 (DSAYFERRRK…AQLRFLLFSK (64 aa)). The interval 122–140 (RRRKNNDAAKRSRDARRQK) is basic motif. The leucine-zipper stretch occupies residues 144–172 (IASKAHALERENMQLRGKVSSLEQEAAQL). The span at 190–200 (ESNDSTETNDS) shows a compositional bias: low complexity. Over residues 201–211 (NDSKSDSTIEV) the composition is skewed to basic and acidic residues.

Belongs to the bZIP family. Interacts with NFIL3 transcription factor homolog atf-2.

The protein localises to the nucleus. In terms of biological role, transcription factor. Required to activate programmed cell death in the sister cells of the serotoninergic neurosecretory motor (NSM) neurons. Negatively regulates the activity of ces-1 which in turn negatively regulates the activities of cell-killing genes. Binds to the DNA sequence 5'-RTTACGTAAY-3'. Involved in the development of the excretory duct cell, by positively modulating embryonic transcription of putative transcription factor lin-48, acting in concert with NFIL3 transcription factor homolog atf-2. Positively modulates expression of neuropeptide pigment dispersing factor homologs pdf-1 and pdf-2. The sequence is that of Transcription factor ces-2 (ces-2) from Caenorhabditis elegans.